An 894-amino-acid chain; its full sequence is Septin and tuftelin-interacting protein 1 homolog (894 aa).

2 disordered regions span residues 71–149 (YEPN…DKPV) and 187–225 (NAGL…RSLG). The segment covering 73–84 (PNEHKLKNKDGE) has biased composition (basic and acidic residues). Basic residues predominate over residues 97–126 (KKKKKEKKEKKQKKKEKKEKKEKKNKKKNK). The 47-residue stretch at 149–195 (VGGIGAALLSKMGYKGTGGLGRDGGGMVEPIKVQVRPKNAGLASVTE) folds into the G-patch domain. Acidic residues predominate over residues 202-217 (DDSDDSDQSEGDTDSD). Positions 329-449 (KQIDIQNQDN…SDNNDNSSLE (121 aa)) form a coiled coil. Residues 785–821 (NNNNNNNINNSYQQQNQQQPIKPISSPSLNSSNNNNI) are disordered.

The protein belongs to the TFP11/STIP family. As to quaternary structure, identified in the spliceosome C complex.

The protein resides in the cytoplasm. It is found in the nucleus. May be involved in pre-mRNA splicing. This chain is Septin and tuftelin-interacting protein 1 homolog (stip-1), found in Dictyostelium discoideum (Social amoeba).